The primary structure comprises 423 residues: Putative competence-damage inducible protein (423 aa).

It belongs to the CinA family.

The chain is Putative competence-damage inducible protein from Streptococcus pyogenes serotype M12 (strain MGAS2096).